The primary structure comprises 255 residues: 1-(5-phosphoribosyl)-5-[(5-phosphoribosylamino)methylideneamino] imidazole-4-carboxamide isomerase (255 aa).

Asp8 (proton acceptor) is an active-site residue. Asp129 serves as the catalytic Proton donor.

It belongs to the HisA/HisF family.

The protein resides in the cytoplasm. It catalyses the reaction 1-(5-phospho-beta-D-ribosyl)-5-[(5-phospho-beta-D-ribosylamino)methylideneamino]imidazole-4-carboxamide = 5-[(5-phospho-1-deoxy-D-ribulos-1-ylimino)methylamino]-1-(5-phospho-beta-D-ribosyl)imidazole-4-carboxamide. It functions in the pathway amino-acid biosynthesis; L-histidine biosynthesis; L-histidine from 5-phospho-alpha-D-ribose 1-diphosphate: step 4/9. The sequence is that of 1-(5-phosphoribosyl)-5-[(5-phosphoribosylamino)methylideneamino] imidazole-4-carboxamide isomerase from Gloeobacter violaceus (strain ATCC 29082 / PCC 7421).